The primary structure comprises 163 residues: 2-C-methyl-D-erythritol 2,4-cyclodiphosphate synthase (163 aa).

The a divalent metal cation site is built by aspartate 8 and histidine 10. 4-CDP-2-C-methyl-D-erythritol 2-phosphate is bound by residues aspartate 8–histidine 10 and histidine 34–serine 35. Histidine 42 contacts a divalent metal cation. Residues aspartate 56 to glycine 58, threonine 132 to glutamate 135, phenylalanine 139, and arginine 142 contribute to the 4-CDP-2-C-methyl-D-erythritol 2-phosphate site.

Belongs to the IspF family. In terms of assembly, homotrimer. A divalent metal cation serves as cofactor.

It carries out the reaction 4-CDP-2-C-methyl-D-erythritol 2-phosphate = 2-C-methyl-D-erythritol 2,4-cyclic diphosphate + CMP. It participates in isoprenoid biosynthesis; isopentenyl diphosphate biosynthesis via DXP pathway; isopentenyl diphosphate from 1-deoxy-D-xylulose 5-phosphate: step 4/6. Functionally, involved in the biosynthesis of isopentenyl diphosphate (IPP) and dimethylallyl diphosphate (DMAPP), two major building blocks of isoprenoid compounds. Catalyzes the conversion of 4-diphosphocytidyl-2-C-methyl-D-erythritol 2-phosphate (CDP-ME2P) to 2-C-methyl-D-erythritol 2,4-cyclodiphosphate (ME-CPP) with a corresponding release of cytidine 5-monophosphate (CMP). This Moorella thermoacetica (strain ATCC 39073 / JCM 9320) protein is 2-C-methyl-D-erythritol 2,4-cyclodiphosphate synthase.